Here is a 188-residue protein sequence, read N- to C-terminus: Elongation factor P (188 aa).

This sequence belongs to the elongation factor P family.

It localises to the cytoplasm. Its pathway is protein biosynthesis; polypeptide chain elongation. Functionally, involved in peptide bond synthesis. Stimulates efficient translation and peptide-bond synthesis on native or reconstituted 70S ribosomes in vitro. Probably functions indirectly by altering the affinity of the ribosome for aminoacyl-tRNA, thus increasing their reactivity as acceptors for peptidyl transferase. The sequence is that of Elongation factor P from Sulfurovum sp. (strain NBC37-1).